A 250-amino-acid polypeptide reads, in one-letter code: Proteasome subunit alpha type-7-A (250 aa).

Lysine 62 is covalently cross-linked (Glycyl lysine isopeptide (Lys-Gly) (interchain with G-Cter in ubiquitin)).

It belongs to the peptidase T1A family. In terms of assembly, component of the 20S core complex of the 26S proteasome. The 26S proteasome is composed of a core protease (CP), known as the 20S proteasome, capped at one or both ends by the 19S regulatory particle (RP/PA700). The 20S proteasome core is composed of 28 subunits that are arranged in four stacked rings, resulting in a barrel-shaped structure. The two end rings are each formed by seven alpha subunits, and the two central rings are each formed by seven beta subunits. The catalytic chamber with the active sites is on the inside of the barrel. Interacts with KIN10 and KIN11 SnRK subunits, and with the SKP1A/ASK1 subunit of the SCF E3 ubiquitin ligase complex. As to expression, expressed in roots, leaves and flowers.

The protein resides in the cytoplasm. It is found in the nucleus. Functionally, the proteasome is a multicatalytic proteinase complex which is characterized by its ability to cleave peptides with Arg, Phe, Tyr, Leu, and Glu adjacent to the leaving group at neutral or slightly basic pH. The proteasome has an ATP-dependent proteolytic activity. Mediates the association of the SCF(TIR1) E3 ubiquitin ligase complex with the proteasome. The protein is Proteasome subunit alpha type-7-A (PAD1) of Arabidopsis thaliana (Mouse-ear cress).